We begin with the raw amino-acid sequence, 199 residues long: Urease accessory protein UreG (199 aa).

Gly-8 to Thr-15 lines the GTP pocket.

It belongs to the SIMIBI class G3E GTPase family. UreG subfamily. As to quaternary structure, homodimer. UreH, UreF and UreG form a complex that acts as a GTP-hydrolysis-dependent molecular chaperone, activating the urease apoprotein by helping to assemble the nickel containing metallocenter of UreC. The UreE protein probably delivers the nickel.

Its subcellular location is the cytoplasm. Facilitates the functional incorporation of the urease nickel metallocenter. This process requires GTP hydrolysis, probably effectuated by UreG. This Helicobacter pylori (strain J99 / ATCC 700824) (Campylobacter pylori J99) protein is Urease accessory protein UreG.